Here is a 238-residue protein sequence, read N- to C-terminus: Sugar fermentation stimulation protein homolog (238 aa).

Belongs to the SfsA family.

The chain is Sugar fermentation stimulation protein homolog from Haemophilus influenzae (strain PittGG).